The following is a 174-amino-acid chain: uncharacterized protein (174 aa).

It belongs to the NAD(P)H dehydrogenase (quinone) family.

This is an uncharacterized protein from Bacillus subtilis (strain 168).